We begin with the raw amino-acid sequence, 348 residues long: Neuronal growth regulator 1 (348 aa).

A signal peptide spans 1–31; the sequence is MVLLAQGACCSNQWLAAVLLSLCSCLPAGQS. 3 Ig-like C2-type domains span residues 32 to 128, 133 to 215, and 219 to 307; these read VDFP…VHLT, PKIY…RVVV, and PTIQ…LPLN. Cysteines 54 and 112 form a disulfide. 2 N-linked (GlcNAc...) asparagine glycosylation sites follow: N67 and N149. Disulfide bonds link C154–C197 and C239–C291. Phosphotyrosine is present on Y181. N269, N280, N288, and N301 each carry an N-linked (GlcNAc...) asparagine glycan. The GPI-anchor amidated glycine moiety is linked to residue G318. Residues 319 to 348 constitute a propeptide, removed in mature form; sequence SACDLFSCWSLALTLSSVISIFYLKNAILQ.

It belongs to the immunoglobulin superfamily. IgLON family. Glycosylated. In terms of tissue distribution, highly expressed in brain.

The protein localises to the cell membrane. May be involved in cell-adhesion. May function as a trans-neural growth-promoting factor in regenerative axon sprouting in the mammalian brain. This is Neuronal growth regulator 1 (Negr1) from Rattus norvegicus (Rat).